A 172-amino-acid polypeptide reads, in one-letter code: Myosin regulatory light chain 12B (172 aa).

Positions 1-16 (MSSKKAKTKTTKKRPQ) are enriched in basic residues. The tract at residues 1–20 (MSSKKAKTKTTKKRPQRATS) is disordered. At Thr-19 the chain carries Phosphothreonine; by MLCK and ZIPK/DAPK3. At Ser-20 the chain carries Phosphoserine; by MLCK and ZIPK/DAPK3. 3 consecutive EF-hand domains span residues 29–64 (SQIQ…LGKN), 98–133 (DPED…MGDR), and 134–169 (FTDE…GAKD). Ca(2+) contacts are provided by Asp-42, Asn-44, Asp-46, and Asp-53.

Myosin is a hexamer of 2 heavy chains and 4 light chains: interacts with myosin heavy chain MYO19. Post-translationally, phosphorylation increases the actin-activated myosin ATPase activity and thereby regulates the contractile activity. It is required to generate the driving force in the migration of the cells but not necessary for localization of myosin-2 at the leading edge. Phosphorylation is reduced following epigallocatechin-3-O-gallate treatment.

In terms of biological role, myosin regulatory subunit that plays an important role in regulation of both smooth muscle and nonmuscle cell contractile activity via its phosphorylation. Phosphorylation triggers actin polymerization in vascular smooth muscle. Implicated in cytokinesis, receptor capping, and cell locomotion. The polypeptide is Myosin regulatory light chain 12B (Myl12b) (Rattus norvegicus (Rat)).